The primary structure comprises 124 residues: MIKDRFLQLIQLLISLFLIMGALGIGITIQKFTGVSVPGSVIGMLVLFFSMTLGLVKVDWVKPGATLFIRYMILLFVPISVGLMQHFDMLLANALPIIASAVGGSLIVLVSLAWLLDYLLKEKH.

4 helical membrane-spanning segments follow: residues 9 to 29 (LIQL…GITI), 35 to 55 (VSVP…TLGL), 72 to 92 (MILL…MLLA), and 95 to 115 (LPII…LAWL).

This sequence belongs to the UPF0299 family.

It is found in the cell inner membrane. The chain is UPF0299 membrane protein VP1300 from Vibrio parahaemolyticus serotype O3:K6 (strain RIMD 2210633).